Reading from the N-terminus, the 207-residue chain is MAKTYDYLFKLLLIGDSGVGKTCVLFRFSEDAFNSTFISTIGIDFKIRTIELDGKRIKLQIWDTAGQERFRTITTAYYRGAMGIMLVYDITNEKSFDNIRNWIRNIEEHASADVEKMILGNKRDVNDKRQVSKERGEKLALDYGIKFMETSAKANINVENAFFTLARDIKAKMDKKLEGNSPQGSNQGVKITPDQQKRSSFFRCVLL.

Ser-17, Gly-18, Val-19, Gly-20, Lys-21, Thr-22, Cys-23, Ser-35, Ser-39, and Thr-40 together coordinate GTP. Thr-22 contacts Mg(2+). 2 short sequence motifs (switch) span residues 31–45 (DAFN…GIDF) and 63–80 (DTAG…YYRG). Positions 40 and 63 each coordinate Mg(2+). Residue Gly-66 participates in GTP binding. Thr-72 is modified (phosphothreonine). GTP is bound by residues Asn-121, Lys-122, Asp-124, Ala-152, and Lys-153. Ser-181 and Ser-185 each carry phosphoserine. At Cys-204 the chain carries Cysteine methyl ester. Cys-204 carries the S-geranylgeranyl cysteine lipid modification. The propeptide at 205–207 (VLL) is removed in mature form.

The protein belongs to the small GTPase superfamily. Rab family. As to quaternary structure, interacts (GTP-bound form) with MICALL1; regulates RAB8A association with recycling endosomes. Interacts with MICALL2; competes with RAB13 and is involved in E-cadherin endocytic recycling. Interacts (GTP-bound form) with MICAL1, MICALCL, MICAL3, EHBP1 and EHBP1L1; at least in case of MICAL1, MICALCL, MICAL3 and EHBP1L1 two molecules of RAB8A can bind to one molecule of the effector protein; ternary complexes of RAB8A, RAB13 and either MICAL1 or EHBP1L1 are possible. Interacts with EHD1. Interacts with MAP4K2 and SYTL4. Interacts with SGSM1 and SGSM3. Interacts with RABIF, RIMS2, RPH3A and RPH3A. Interacts with OPTN. Interacts with RAB3IP, RAB3IP functions as guanine exchange factor (GEF). Interacts with MYO5B. Interacts with CIMAP3. Interacts with BIRC6/bruce. Interacts with OCRL. Interacts with AHI1. Interacts with DCDC1. Interacts with LRRK2; interaction facilitates phosphorylation of Thr-72. Interacts with RAB31P, GDI1, GDI2, CHM, CHML, RABGGTA, RABGGTB, TBC1D15 and INPP5B; these interactions are dependent on Thr-72 not being phosphorylated. Interacts with RILPL1 and RILPL2; these interactions are dependent on the phosphorylation of Thr-72 by LRRK2. Interacts with DZIP1; prevents inhibition by the GDP-dissociation inhibitor GDI2. Interacts (in GDP-bound form) with RAB3IP/Rabin8, RAB3IP functions as guanine exchange factor (GEF) towards RAB8A. Interacts (in GDP-bound form) with RPGR, RPGR functions as GEF towards RAB8A. Mg(2+) is required as a cofactor. Post-translationally, phosphorylation of Thr-72 in the switch II region by LRRK2 prevents the association of RAB regulatory proteins, including CHM, CHML and RAB GDP dissociation inhibitors GDI1 and GDI2. Phosphorylation by LRRK2 is required for localization to stressed lysosomes.

Its subcellular location is the cell membrane. It localises to the golgi apparatus. The protein resides in the endosome membrane. It is found in the recycling endosome membrane. The protein localises to the cell projection. Its subcellular location is the cilium. It localises to the cytoplasmic vesicle. The protein resides in the phagosome membrane. It is found in the cytoplasm. The protein localises to the cytoskeleton. Its subcellular location is the microtubule organizing center. It localises to the centrosome. The protein resides in the centriole. It is found in the cilium basal body. The protein localises to the midbody. Its subcellular location is the lysosome. The catalysed reaction is GTP + H2O = GDP + phosphate + H(+). Its activity is regulated as follows. Regulated by guanine nucleotide exchange factors (GEFs) such as RAB3IP/Rabin8 and RPGR which promote the exchange of bound GDP for free GTP, GTPase activating proteins (GAPs) which increase the GTP hydrolysis activity, and GDP dissociation inhibitors (GDIs) which inhibit the dissociation of the nucleotide from the GTPase. Activated in response to insulin. Functionally, the small GTPases Rab are key regulators of intracellular membrane trafficking, from the formation of transport vesicles to their fusion with membranes. Rabs cycle between an inactive GDP-bound form and an active GTP-bound form that is able to recruit to membranes different sets of downstream effectors directly responsible for vesicle formation, movement, tethering and fusion. RAB8A is involved in polarized vesicular trafficking and neurotransmitter release. Together with RAB11A, RAB3IP, the exocyst complex, PARD3, PRKCI, ANXA2, CDC42 and DNMBP promotes transcytosis of PODXL to the apical membrane initiation sites (AMIS), apical surface formation and lumenogenesis. Regulates the compacted morphology of the Golgi. Together with MYO5B and RAB11A participates in epithelial cell polarization. Also involved in membrane trafficking to the cilium and ciliogenesis. Together with MICALL2, may also regulate adherens junction assembly. May play a role in insulin-induced transport to the plasma membrane of the glucose transporter GLUT4 and therefore play a role in glucose homeostasis. Involved in autophagy. Participates in the export of a subset of neosynthesized proteins through a Rab8-Rab10-Rab11-dependent endososomal export route. Targeted to and stabilized on stressed lysosomes through LRRK2 phosphorylation. Suppresses stress-induced lysosomal enlargement through EHBP1 and EHNP1L1 effector proteins. The sequence is that of Ras-related protein Rab-8A (RAB8A) from Pongo abelii (Sumatran orangutan).